A 131-amino-acid chain; its full sequence is Large ribosomal subunit protein bL19 (131 aa).

This sequence belongs to the bacterial ribosomal protein bL19 family.

Its function is as follows. This protein is located at the 30S-50S ribosomal subunit interface and may play a role in the structure and function of the aminoacyl-tRNA binding site. This is Large ribosomal subunit protein bL19 from Polynucleobacter necessarius subsp. necessarius (strain STIR1).